The chain runs to 573 residues: Potassium-transporting ATPase potassium-binding subunit (573 aa).

10 helical membrane passes run 6–26 (ILFA…GSYI), 66–86 (FFSL…ILLL), 135–155 (ALAV…IALI), 177–197 (IFWI…FQGV), 257–277 (IQMV…GKWV), 283–303 (GWLI…VMTI), 382–402 (IFGG…LAVF), 428–448 (MFAL…AAVI), 493–513 (ITIA…VIML), and 537–557 (FIFA…TIFP).

It belongs to the KdpA family. In terms of assembly, the system is composed of three essential subunits: KdpA, KdpB and KdpC.

It localises to the cell inner membrane. In terms of biological role, part of the high-affinity ATP-driven potassium transport (or Kdp) system, which catalyzes the hydrolysis of ATP coupled with the electrogenic transport of potassium into the cytoplasm. This subunit binds the periplasmic potassium ions and delivers the ions to the membrane domain of KdpB through an intramembrane tunnel. The chain is Potassium-transporting ATPase potassium-binding subunit from Francisella tularensis subsp. novicida (strain U112).